Here is a 382-residue protein sequence, read N- to C-terminus: Protein shisa-9A (382 aa).

Residues 1 to 26 (MKWTVLLLEYFLVKVLVLLYSADGEA) form the signal peptide. At 27 to 132 (QQLEGFIMLS…DPRHDPTKDK (106 aa)) the chain is on the extracellular side. Asn-39 is a glycosylation site (N-linked (GlcNAc...) asparagine). Residues 133–153 (TNLIVYIICGVVAIMALVGIF) form a helical membrane-spanning segment. Over 154-382 (TKLGLEKAHR…VTNSKAEVTV (229 aa)) the chain is Cytoplasmic.

The protein belongs to the shisa family. SHISA9 subfamily. Component of some AMPA receptors (ionotropic glutamate receptors) complex.

It is found in the cell projection. It localises to the dendritic spine membrane. Its subcellular location is the synapse. Its function is as follows. Regulator of short-term neuronal synaptic plasticity in the dentate gyrus. Associates with AMPA receptors (ionotropic glutamate receptors) in synaptic spines and promotes AMPA receptor desensitization at excitatory synapses. The polypeptide is Protein shisa-9A (shisa9a) (Danio rerio (Zebrafish)).